A 739-amino-acid chain; its full sequence is Phosphoribosylformylglycinamidine synthase subunit PurL (739 aa).

H54 is a catalytic residue. ATP is bound by residues Y57 and K96. Position 98 (E98) interacts with Mg(2+). Substrate contacts are provided by residues S99–H102 and R121. H100 acts as the Proton acceptor in catalysis. D122 serves as a coordination point for Mg(2+). Q245 lines the substrate pocket. Residue D273 coordinates Mg(2+). Residue E317 to Q319 coordinates substrate. 2 residues coordinate ATP: D500 and G537. Position 538 (N538) interacts with Mg(2+). S540 serves as a coordination point for substrate.

This sequence belongs to the FGAMS family. Monomer. Part of the FGAM synthase complex composed of 1 PurL, 1 PurQ and 2 PurS subunits.

It localises to the cytoplasm. The enzyme catalyses N(2)-formyl-N(1)-(5-phospho-beta-D-ribosyl)glycinamide + L-glutamine + ATP + H2O = 2-formamido-N(1)-(5-O-phospho-beta-D-ribosyl)acetamidine + L-glutamate + ADP + phosphate + H(+). The protein operates within purine metabolism; IMP biosynthesis via de novo pathway; 5-amino-1-(5-phospho-D-ribosyl)imidazole from N(2)-formyl-N(1)-(5-phospho-D-ribosyl)glycinamide: step 1/2. Part of the phosphoribosylformylglycinamidine synthase complex involved in the purines biosynthetic pathway. Catalyzes the ATP-dependent conversion of formylglycinamide ribonucleotide (FGAR) and glutamine to yield formylglycinamidine ribonucleotide (FGAM) and glutamate. The FGAM synthase complex is composed of three subunits. PurQ produces an ammonia molecule by converting glutamine to glutamate. PurL transfers the ammonia molecule to FGAR to form FGAM in an ATP-dependent manner. PurS interacts with PurQ and PurL and is thought to assist in the transfer of the ammonia molecule from PurQ to PurL. The polypeptide is Phosphoribosylformylglycinamidine synthase subunit PurL (Bacillus cereus (strain AH187)).